A 327-amino-acid polypeptide reads, in one-letter code: Nuclear apoptosis-inducing factor 1 (327 aa).

The segment at 1–70 (MAVPAKKRKM…CRRELPEVKK (70 aa)) is required for nuclear localization and apoptosis-inducing activity. Positions 87–98 (RAAVEGGEAPGP) are enriched in low complexity. Disordered regions lie at residues 87-118 (RAAV…GGGP) and 303-327 (NTAN…SIIQ). A compositionally biased stretch (gly residues) spans 104-118 (AGGPGTGGGSGGGGP). Positions 316-327 (VAQNGQPDSIIQ) are enriched in polar residues.

The protein belongs to the NAIF1 family. As to quaternary structure, interacts with HARBI1. As to expression, widely expressed.

The protein resides in the nucleus. Its function is as follows. Induces apoptosis. The protein is Nuclear apoptosis-inducing factor 1 (NAIF1) of Homo sapiens (Human).